The primary structure comprises 662 residues: Carboxysome assembly protein CsoS2 (662 aa).

The tract at residues 1–227 (MSTSNAQSGR…KRRNAKEAPQ (227 aa)) is N-terminal domain. 3 disordered regions span residues 1–258 (MSTS…SESG), 277–322 (NCDV…TCSA), and 342–419 (PAKS…RGSC). The N-repeat 1 repeat unit spans residues 8–27 (SGRAAAIARRNAQVKGKGYT). Composition is skewed to low complexity over residues 28–57 (ASAA…SQPS) and 64–76 (SVAP…ASAA). Residues 58–72 (RSRRKVSVAPTATPA) form an N-repeat 2 repeat. Positions 120 to 135 (RQAKAEKPTKRSERRT) are enriched in basic and acidic residues. A compositionally biased stretch (polar residues) spans 141 to 150 (VASQQPSGRL). The N-repeat 3 repeat unit spans residues 147–168 (SGRLQSKAYRKAQAKGKAGQEA). Low complexity-rich tracts occupy residues 161-170 (KGKAGQEAFK), 237-247 (GQSVSGTQVGQ), and 289-300 (VTQTQTTRGQVV). M-repeat repeat units follow at residues 228 to 278 (KVGE…SKNC), 288 to 338 (KVTQ…KMYC), 388 to 436 (KVMP…AKAC), 446 to 491 (KVTA…TEQF), and 496 to 550 (VDEQ…AMVC). The middle region stretch occupies residues 228–559 (KVGESQTLHG…CDSTNAAAPG (332 aa)). Residues 391-404 (PSQTAKGNTTTGSQ) show a composition bias toward polar residues. The C-terminal domain stretch occupies residues 560-631 (ESDFPAMIGQ…SPMGASQYRP (72 aa)). The stretch at 564 to 572 (PAMIGQAQP) is one C-repeat 1 repeat. Disordered regions lie at residues 588 to 607 (KITG…DGPW) and 619 to 662 (AGQS…GARA). The tract at residues 632–662 (VNNEVPMSPITGSSGNTDTGAKVTLSGGARA) is C-terminal peptide. Residues 641–650 (ITGSSGNTDT) are compositionally biased toward polar residues.

The protein belongs to the CsoS2 family. Interacts via its N-terminal repeats with RuBisCO. Interacts with the major shell protein CsoS1. Unlike H.neapolitanus and predictions for P.marinus strain MIT 9313, this protein is not thought to have ribosomal frameshifting.

It is found in the carboxysome. Required for alpha-carboxysome (Cb) assembly, mediates interaction between RuBisCO and the Cb shell. The protein is probably intrinsically disordered. The C-terminal repeats act as the encapsulation signal to target proteins to the Cb; they are necessary and sufficient to target both CsoS2 and foreign proteins to the Cb. The N-terminal repeats of this protein bind simultaneously to both subunits of RuBisCO. Probably also interacts with the major shell proteins (CsoS1); that interaction would increase the local concentration of CsoS2 so that it can condense RuBisCO and full carboxysomes can be formed. In Hydrogenovibrio crunogenus (strain DSM 25203 / XCL-2) (Thiomicrospira crunogena), this protein is Carboxysome assembly protein CsoS2.